The primary structure comprises 105 residues: Nucleoid-associated protein SaurJH1_0513 (105 aa).

The tract at residues 1–33 (MRGGGNMQQMMKQMQKMQKKMAQEQKKLKEERI) is disordered. Residues 7–16 (MQQMMKQMQK) are compositionally biased toward low complexity. Positions 21–33 (MAQEQKKLKEERI) are enriched in basic and acidic residues.

The protein belongs to the YbaB/EbfC family. In terms of assembly, homodimer.

It localises to the cytoplasm. It is found in the nucleoid. In terms of biological role, binds to DNA and alters its conformation. May be involved in regulation of gene expression, nucleoid organization and DNA protection. This Staphylococcus aureus (strain JH1) protein is Nucleoid-associated protein SaurJH1_0513.